A 117-amino-acid chain; its full sequence is Large ribosomal subunit protein bL19 (117 aa).

The protein belongs to the bacterial ribosomal protein bL19 family.

Functionally, this protein is located at the 30S-50S ribosomal subunit interface and may play a role in the structure and function of the aminoacyl-tRNA binding site. In Vibrio vulnificus (strain CMCP6), this protein is Large ribosomal subunit protein bL19.